A 770-amino-acid chain; its full sequence is Penicillin-binding protein 1C (770 aa).

At 1 to 8 (MPRLLTKR) the chain is on the cytoplasmic side. Residues 9–29 (GCWITLAAAPFLLFLAAWGAD) traverse the membrane as a helical; Signal-anchor for type II membrane protein segment. Residues 30–770 (KLWPLPLHEV…QIATVKFVMQ (741 aa)) lie on the Periplasmic side of the membrane. The tract at residues 43-213 (RVVVAQDGTP…SRLRPDRWPE (171 aa)) is transglycosylase. The Proton donor; for transglycosylase activity role is filled by E84. The interval 278–559 (AGLQRRLEEL…FASAVPLLNQ (282 aa)) is transpeptidase. S342 serves as the catalytic Acyl-ester intermediate; for transpeptidase activity.

This sequence in the N-terminal section; belongs to the glycosyltransferase 51 family. In the C-terminal section; belongs to the transpeptidase family.

Its subcellular location is the cell inner membrane. The catalysed reaction is [GlcNAc-(1-&gt;4)-Mur2Ac(oyl-L-Ala-gamma-D-Glu-L-Lys-D-Ala-D-Ala)](n)-di-trans,octa-cis-undecaprenyl diphosphate + beta-D-GlcNAc-(1-&gt;4)-Mur2Ac(oyl-L-Ala-gamma-D-Glu-L-Lys-D-Ala-D-Ala)-di-trans,octa-cis-undecaprenyl diphosphate = [GlcNAc-(1-&gt;4)-Mur2Ac(oyl-L-Ala-gamma-D-Glu-L-Lys-D-Ala-D-Ala)](n+1)-di-trans,octa-cis-undecaprenyl diphosphate + di-trans,octa-cis-undecaprenyl diphosphate + H(+). The protein operates within cell wall biogenesis; peptidoglycan biosynthesis. Its activity is regulated as follows. Transglycosylase activity can be inhibited by moenomycin. Functionally, cell wall formation. The enzyme has a penicillin-insensitive transglycosylase N-terminal domain (formation of linear glycan strands) and a transpeptidase C-terminal domain which may not be functional. This chain is Penicillin-binding protein 1C (pbpC), found in Escherichia coli (strain K12).